Here is a 417-residue protein sequence, read N- to C-terminus: Phosphoglycerate kinase (417 aa).

(2R)-3-phosphoglycerate contacts are provided by valine 23, aspartate 24, phenylalanine 25, asparagine 26, glutamine 38, arginine 39, serine 62, histidine 63, glycine 65, arginine 66, leucine 121, arginine 122, histidine 169, and arginine 170. Glycine 213 contributes to the ADP binding site. A CDP-binding site is contributed by glycine 213. The AMP site is built by alanine 214 and lysine 215. Alanine 214 contacts ATP. Mg(2+) is bound at residue alanine 214. Position 218 (aspartate 218) interacts with CDP. Aspartate 218 is a binding site for Mg(2+). AMP is bound at residue lysine 219. Lysine 219 contacts ATP. Glycine 237 contacts ADP. Glycine 237 provides a ligand contact to CDP. AMP-binding residues include glycine 238 and glycine 312. The ATP site is built by glycine 238 and glycine 312. CDP is bound by residues glycine 337 and phenylalanine 342. Phenylalanine 342 contributes to the ADP binding site. AMP is bound at residue glutamate 343. Residues glutamate 343, aspartate 374, and threonine 375 each coordinate ATP. Aspartate 374 contributes to the Mg(2+) binding site.

It belongs to the phosphoglycerate kinase family. In terms of assembly, monomer. Mg(2+) serves as cofactor.

The protein localises to the cytoplasm. It localises to the mitochondrion. It catalyses the reaction (2R)-3-phosphoglycerate + ATP = (2R)-3-phospho-glyceroyl phosphate + ADP. The protein operates within carbohydrate degradation; glycolysis; pyruvate from D-glyceraldehyde 3-phosphate: step 2/5. Its function is as follows. Catalyzes one of the two ATP producing reactions in the glycolytic pathway via the reversible conversion of 1,3-diphosphoglycerate to 3-phosphoglycerate. Both L- and D- forms of purine and pyrimidine nucleotides can be used as substrates, but the activity is much lower on pyrimidines. Negatively regulates the biosynthesis of acetyl-CoA from pyruvate in the mitochondrion. This chain is Phosphoglycerate kinase (PGK1), found in Yarrowia lipolytica (strain CLIB 122 / E 150) (Yeast).